The sequence spans 311 residues: Formimidoylglutamase (311 aa).

6 residues coordinate Mn(2+): histidine 130, aspartate 155, histidine 157, aspartate 159, cysteine 242, and aspartate 244.

This sequence belongs to the arginase family. Requires Mn(2+) as cofactor.

The catalysed reaction is N-formimidoyl-L-glutamate + H2O = formamide + L-glutamate. The protein operates within amino-acid degradation; L-histidine degradation into L-glutamate; L-glutamate from N-formimidoyl-L-glutamate (hydrolase route): step 1/1. Its function is as follows. Catalyzes the conversion of N-formimidoyl-L-glutamate to L-glutamate and formamide. The chain is Formimidoylglutamase from Staphylococcus aureus (strain MRSA252).